Consider the following 148-residue polypeptide: Large ribosomal subunit protein bL9 (148 aa).

The protein belongs to the bacterial ribosomal protein bL9 family.

Functionally, binds to the 23S rRNA. The sequence is that of Large ribosomal subunit protein bL9 from Pseudomonas fluorescens (strain Pf0-1).